Reading from the N-terminus, the 439-residue chain is uncharacterized protein (439 aa).

CBS domains lie at 195–254 and 256–314; these read LTPA…SIEK and MTKN…KQPQ.

This is an uncharacterized protein from Bacillus subtilis (strain 168).